A 44-amino-acid chain; its full sequence is Photosystem I reaction center subunit IX (44 aa).

Residues Y9–I29 traverse the membrane as a helical segment.

Belongs to the PsaJ family.

The protein resides in the cellular thylakoid membrane. Its function is as follows. May help in the organization of the PsaE and PsaF subunits. This is Photosystem I reaction center subunit IX from Prochlorococcus marinus (strain MIT 9312).